We begin with the raw amino-acid sequence, 268 residues long: Glucosamine-6-phosphate deaminase (268 aa).

The active-site Proton acceptor; for enolization step is the aspartate 67. Asparagine 137 functions as the For ring-opening step in the catalytic mechanism. The Proton acceptor; for ring-opening step role is filled by histidine 139. Residue glutamate 144 is the For ring-opening step of the active site.

The protein belongs to the glucosamine/galactosamine-6-phosphate isomerase family. NagB subfamily. In terms of assembly, homohexamer.

It catalyses the reaction alpha-D-glucosamine 6-phosphate + H2O = beta-D-fructose 6-phosphate + NH4(+). It participates in amino-sugar metabolism; N-acetylneuraminate degradation; D-fructose 6-phosphate from N-acetylneuraminate: step 5/5. In terms of biological role, catalyzes the reversible isomerization-deamination of glucosamine 6-phosphate (GlcN6P) to form fructose 6-phosphate (Fru6P) and ammonium ion. This is Glucosamine-6-phosphate deaminase from Colwellia psychrerythraea (strain 34H / ATCC BAA-681) (Vibrio psychroerythus).